We begin with the raw amino-acid sequence, 101 residues long: UPF0473 protein spr0177 (101 aa).

The protein belongs to the UPF0473 family.

The protein is UPF0473 protein spr0177 of Streptococcus pneumoniae (strain ATCC BAA-255 / R6).